The following is a 98-amino-acid chain: NADH-ubiquinone oxidoreductase chain 4L (98 aa).

3 helical membrane-spanning segments follow: residues methionine 1–methionine 21, serine 29–leucine 49, and isoleucine 61–valine 81.

The protein belongs to the complex I subunit 4L family. As to quaternary structure, core subunit of respiratory chain NADH dehydrogenase (Complex I) which is composed of 45 different subunits.

It localises to the mitochondrion inner membrane. It catalyses the reaction a ubiquinone + NADH + 5 H(+)(in) = a ubiquinol + NAD(+) + 4 H(+)(out). Its function is as follows. Core subunit of the mitochondrial membrane respiratory chain NADH dehydrogenase (Complex I) which catalyzes electron transfer from NADH through the respiratory chain, using ubiquinone as an electron acceptor. Part of the enzyme membrane arm which is embedded in the lipid bilayer and involved in proton translocation. This chain is NADH-ubiquinone oxidoreductase chain 4L (MT-ND4L), found in Mogera wogura (Japanese mole).